The primary structure comprises 257 residues: Short-chain dehydrogenase reductase 3b (257 aa).

12-36 (IITGGASGIGAESVRLFTEHGARVV) serves as a coordination point for NAD(+). Serine 144 is a binding site for substrate. Tyrosine 157 (proton acceptor) is an active-site residue.

The protein belongs to the short-chain dehydrogenases/reductases (SDR) family.

This chain is Short-chain dehydrogenase reductase 3b (SDR3b), found in Arabidopsis thaliana (Mouse-ear cress).